Here is an 85-residue protein sequence, read N- to C-terminus: Protein MANBAL (85 aa).

The helical transmembrane segment at 24 to 44 (YGLFLGAIFQLICVLAIIVPI) threads the bilayer. The segment covering 49–64 (EAEAEQAEPRSAEGPK) has biased composition (basic and acidic residues). The interval 49-85 (EAEAEQAEPRSAEGPKKPKAAIASTNKRPKKETKKKR) is disordered. Positions 75-85 (KRPKKETKKKR) are enriched in basic residues.

It belongs to the UPF0239 family.

The protein resides in the membrane. This chain is Protein MANBAL (Manbal), found in Mus musculus (Mouse).